Reading from the N-terminus, the 332-residue chain is Azadirone synthase LFS (332 aa).

A Fe2OG dioxygenase domain is found at 181-286 (ANANYTNMFH…RYSTGTFICP (106 aa)). Fe cation is bound by residues His208, Asp210, and His269. Arg277 serves as a coordination point for 2-oxoglutarate.

The protein belongs to the iron/ascorbate-dependent oxidoreductase family. Fe(2+) serves as cofactor. In terms of tissue distribution, mainly expressed in petioles and, to a lower extent, in roots.

The enzyme catalyses (1S,3bR,4R,5aR,9aR,9bR,11aS)-1-(1-hydroxy-4-oxobutan-2-yl)-3b,6,6,9a,11a-pentamethyl-7-oxo-1H,2H,3bH,4H,5H,5aH,6H,7H,9aH,9bH,10H,11H,11aH-cyclopenta[a]phenanthren-4-yl acetate + 2-oxoglutarate + O2 = azadirone + succinate + CO2 + 2 H2O. It participates in secondary metabolite biosynthesis; terpenoid biosynthesis. Its function is as follows. 2-oxoglutarate-Fe(II) type oxidoreductase involved in the biosynthesis of limonoids triterpene natural products such as azadirachtin, an antifeedant widely used as bioinsecticide, and possessing many medicinal applications including anti-tumoral, anti-malarial, anti-rheumatic, antibacterial, anti-inflammatory, anti-pyretic and diuretic effects. Catalyzes the formation of azadirone. The protein is Azadirone synthase LFS of Melia azedarach (Chinaberry tree).